The sequence spans 318 residues: MLNSFDSAYHALCEEILEIGNQRDDRTHTGTFSKFGHQLRFDLSKGFPLLTTKKVSFKLIATELLWFIKGDTNIQYLLKYNNNIWNEWAFEKYVQSNDYHGPDMTNFGHRALQDDEFNELYKEEMSKFKQHILNDDSFAKKYGDLGNVYGKQWRDWVDKEGNHFDQLKTVIEQIKNSPNSRRHIVSAWNPTEIDSMALPPCHTMFQFYVQDGRLSCQLYQRSADIFLGVPFNIASYALLTHLIAKECNLEVGEFVHTFGDAHIYSNHIEAIKTQLSRNSFDPPTLKINSNASIFDINYEDLELIGYNSHPAIKAPIAV.

DUMP is bound by residues R26 and 181–182 (RR). C201 functions as the Nucleophile in the catalytic mechanism. DUMP contacts are provided by residues 221–224 (RSAD), N232, and 262–264 (HIY). Position 224 (D224) interacts with (6R)-5,10-methylene-5,6,7,8-tetrahydrofolate. (6R)-5,10-methylene-5,6,7,8-tetrahydrofolate is bound at residue A317.

Belongs to the thymidylate synthase family. Bacterial-type ThyA subfamily. Homodimer.

It localises to the cytoplasm. The enzyme catalyses dUMP + (6R)-5,10-methylene-5,6,7,8-tetrahydrofolate = 7,8-dihydrofolate + dTMP. It functions in the pathway pyrimidine metabolism; dTTP biosynthesis. Functionally, catalyzes the reductive methylation of 2'-deoxyuridine-5'-monophosphate (dUMP) to 2'-deoxythymidine-5'-monophosphate (dTMP) while utilizing 5,10-methylenetetrahydrofolate (mTHF) as the methyl donor and reductant in the reaction, yielding dihydrofolate (DHF) as a by-product. This enzymatic reaction provides an intracellular de novo source of dTMP, an essential precursor for DNA biosynthesis. In Staphylococcus haemolyticus (strain JCSC1435), this protein is Thymidylate synthase.